A 705-amino-acid polypeptide reads, in one-letter code: Structure-specific endonuclease subunit SLX1 homolog (705 aa).

The region spanning 4–90 (RFHCVYLLTS…TASARLRHAI (87 aa)) is the GIY-YIG domain. Disordered stretches follow at residues 155–192 (RASS…DSKG) and 290–323 (ASFA…RVHT). Polar residues-rich tracts occupy residues 160–175 (RVGT…SLQG) and 310–320 (STGSRTPSPQR). An SLX1-type zinc finger spans residues 446–526 (CSLCTLPLQP…PSQPCPCPLC (81 aa)). Low complexity predominate over residues 595 to 604 (KGAGEAPGAA). Residues 595–628 (KGAGEAPGAASTVRASTMHVGPARRDAPRVSSPS) are disordered.

This sequence belongs to the SLX1 family. Forms a heterodimer with a member of the SLX4 family. Requires a divalent metal cation as cofactor.

Its subcellular location is the nucleus. In terms of biological role, catalytic subunit of a heterodimeric structure-specific endonuclease that resolves DNA secondary structures generated during DNA repair and recombination. Has endonuclease activity towards branched DNA substrates, introducing single-strand cuts in duplex DNA close to junctions with ss-DNA. The sequence is that of Structure-specific endonuclease subunit SLX1 homolog from Leishmania infantum.